The chain runs to 134 residues: Small ribosomal subunit protein uS8 (134 aa).

The protein belongs to the universal ribosomal protein uS8 family. In terms of assembly, part of the 30S ribosomal subunit. Contacts proteins S5 and S12.

In terms of biological role, one of the primary rRNA binding proteins, it binds directly to 16S rRNA central domain where it helps coordinate assembly of the platform of the 30S subunit. The protein is Small ribosomal subunit protein uS8 of Thermosipho melanesiensis (strain DSM 12029 / CIP 104789 / BI429).